The sequence spans 548 residues: Putative malate oxidoreductase [NAD] (548 aa).

The active-site Proton donor is tyrosine 96. Residue lysine 169 is the Proton acceptor of the active site. Residues glutamate 240, aspartate 241, and aspartate 264 each contribute to the a divalent metal cation site. NAD(+) contacts are provided by residues 297-300 (AGTA), asparagine 410, and asparagine 455.

Belongs to the malic enzymes family. It depends on Mg(2+) as a cofactor. Mn(2+) is required as a cofactor.

It carries out the reaction (S)-malate + NAD(+) = pyruvate + CO2 + NADH. The catalysed reaction is oxaloacetate + H(+) = pyruvate + CO2. In Mycobacterium tuberculosis (strain CDC 1551 / Oshkosh), this protein is Putative malate oxidoreductase [NAD] (mez).